We begin with the raw amino-acid sequence, 200 residues long: Superoxide dismutase [Fe] (200 aa).

Fe cation-binding residues include His28, His80, Asp162, and His166.

This sequence belongs to the iron/manganese superoxide dismutase family. Homodimer. The cofactor is Fe cation.

It catalyses the reaction 2 superoxide + 2 H(+) = H2O2 + O2. In terms of biological role, destroys superoxide anion radicals which are normally produced within the cells and which are toxic to biological systems. In Nostoc sp. (strain PCC 7120 / SAG 25.82 / UTEX 2576), this protein is Superoxide dismutase [Fe] (sodB).